The following is a 225-amino-acid chain: Ribosome maturation factor RimM (225 aa).

The PRC barrel domain maps to 144–225; it reads ADEFYWVDLI…RIVVDWEADY (82 aa).

This sequence belongs to the RimM family. Binds ribosomal protein uS19.

Its subcellular location is the cytoplasm. Its function is as follows. An accessory protein needed during the final step in the assembly of 30S ribosomal subunit, possibly for assembly of the head region. Essential for efficient processing of 16S rRNA. May be needed both before and after RbfA during the maturation of 16S rRNA. It has affinity for free ribosomal 30S subunits but not for 70S ribosomes. This chain is Ribosome maturation factor RimM, found in Burkholderia vietnamiensis (strain G4 / LMG 22486) (Burkholderia cepacia (strain R1808)).